The primary structure comprises 523 residues: Sialate O-acetylesterase (523 aa).

An N-terminal signal peptide occupies residues 1–23 (MVAPGLVLGLVLPLILWADRSAG). N-linked (GlcNAc...) asparagine glycans are attached at residues N107, N138, N267, N290, N401, and N422.

In terms of tissue distribution, widely expressed with high expression in the testis, prostate, and colon.

The protein localises to the lysosome. Its subcellular location is the cytoplasm. It carries out the reaction N-acetyl-9-O-acetylneuraminate + H2O = N-acetylneuraminate + acetate + H(+). It catalyses the reaction an Ac-O-9-sialoglycoconjugate + H2O = a sialoglycoconjugate + acetate + H(+). Catalyzes the removal of O-acetyl ester groups from position 9 of the free diacetylated sialate N-acetyl-9-O-acetylneuraminate (Neu5,9Ac2) in the cytosol and of the diacetylated sialate residues of sialylglycoconjugates in the lysosomes. Together with the sialate-O-acetyltransferase they regulate the balance of acetylated sialoglycoconjugates, key players in various processes such as cell-cell interactions, host-pathogen recognition, and tumor antigenicity. This is Sialate O-acetylesterase (SIAE) from Homo sapiens (Human).